The primary structure comprises 422 residues: Tyrosine--tRNA ligase 1 (422 aa).

Position 36 (Tyr-36) interacts with L-tyrosine. The short motif at 41–50 (PTAGSLHIGH) is the 'HIGH' region element. Residues Tyr-173 and Gln-177 each contribute to the L-tyrosine site. Residues 233 to 237 (KFGKT) carry the 'KMSKS' region motif. An ATP-binding site is contributed by Lys-236. Residues 355-419 (SDVVTLLLET…GKKQFAMVKL (65 aa)) enclose the S4 RNA-binding domain.

It belongs to the class-I aminoacyl-tRNA synthetase family. TyrS type 1 subfamily. As to quaternary structure, homodimer.

Its subcellular location is the cytoplasm. It catalyses the reaction tRNA(Tyr) + L-tyrosine + ATP = L-tyrosyl-tRNA(Tyr) + AMP + diphosphate + H(+). Catalyzes the attachment of tyrosine to tRNA(Tyr) in a two-step reaction: tyrosine is first activated by ATP to form Tyr-AMP and then transferred to the acceptor end of tRNA(Tyr). This chain is Tyrosine--tRNA ligase 1, found in Vibrio vulnificus (strain YJ016).